We begin with the raw amino-acid sequence, 450 residues long: Methionine aminopeptidase 2-2 (450 aa).

Composition is skewed to basic and acidic residues over residues 1-10 (MGAKISEDHP) and 30-39 (RGAHLSRDGD). The interval 1–100 (MGAKISEDHP…PPRVPLSELF (100 aa)) is disordered. Residues 47-56 (GDDDDDDDEG) are compositionally biased toward acidic residues. Over residues 69-86 (KKKKKKRKPKKKKAKKAT) the composition is skewed to basic residues. H211 serves as a coordination point for substrate. Positions 232, 243, and 302 each coordinate a divalent metal cation. A substrate-binding site is contributed by H310. Positions 335 and 431 each coordinate a divalent metal cation.

This sequence belongs to the peptidase M24A family. Methionine aminopeptidase eukaryotic type 2 subfamily. It depends on Co(2+) as a cofactor. Zn(2+) serves as cofactor. Requires Mn(2+) as cofactor. Fe(2+) is required as a cofactor.

It is found in the cytoplasm. It carries out the reaction Release of N-terminal amino acids, preferentially methionine, from peptides and arylamides.. In terms of biological role, cotranslationally removes the N-terminal methionine from nascent proteins. The N-terminal methionine is often cleaved when the second residue in the primary sequence is small and uncharged (Met-Ala-, Cys, Gly, Pro, Ser, Thr, or Val). The sequence is that of Methionine aminopeptidase 2-2 from Fusarium vanettenii (strain ATCC MYA-4622 / CBS 123669 / FGSC 9596 / NRRL 45880 / 77-13-4) (Fusarium solani subsp. pisi).